The sequence spans 219 residues: 7-cyano-7-deazaguanine synthase (219 aa).

10–20 (FSGGQDSTTCL) serves as a coordination point for ATP. Zn(2+)-binding residues include C188, C196, C199, and C202.

This sequence belongs to the QueC family. The cofactor is Zn(2+).

It catalyses the reaction 7-carboxy-7-deazaguanine + NH4(+) + ATP = 7-cyano-7-deazaguanine + ADP + phosphate + H2O + H(+). The protein operates within purine metabolism; 7-cyano-7-deazaguanine biosynthesis. Catalyzes the ATP-dependent conversion of 7-carboxy-7-deazaguanine (CDG) to 7-cyano-7-deazaguanine (preQ(0)). This is 7-cyano-7-deazaguanine synthase from Neisseria meningitidis serogroup C / serotype 2a (strain ATCC 700532 / DSM 15464 / FAM18).